Reading from the N-terminus, the 456-residue chain is Bifunctional protein GlmU (456 aa).

The tract at residues 1 to 229 (MLNNAMSVVI…LSEVEGVNNR (229 aa)) is pyrophosphorylase. Residues 11 to 14 (LAAG), Lys25, Gln76, 81 to 82 (GT), 103 to 105 (YGD), Gly140, Glu154, Asn169, and Asn227 each bind UDP-N-acetyl-alpha-D-glucosamine. Asp105 is a Mg(2+) binding site. Mg(2+) is bound at residue Asn227. Residues 230–250 (LQLSRLERVYQSEQAEKLLLA) form a linker region. Positions 251–456 (GVMLRDPARF…EGWRRPVKKK (206 aa)) are N-acetyltransferase. Residues Arg333 and Lys351 each coordinate UDP-N-acetyl-alpha-D-glucosamine. His363 acts as the Proton acceptor in catalysis. UDP-N-acetyl-alpha-D-glucosamine contacts are provided by Tyr366 and Asn377. Residues Ala380, 386 to 387 (NY), Ser405, Ala423, and Arg440 contribute to the acetyl-CoA site.

It in the N-terminal section; belongs to the N-acetylglucosamine-1-phosphate uridyltransferase family. The protein in the C-terminal section; belongs to the transferase hexapeptide repeat family. As to quaternary structure, homotrimer. Requires Mg(2+) as cofactor.

The protein resides in the cytoplasm. The catalysed reaction is alpha-D-glucosamine 1-phosphate + acetyl-CoA = N-acetyl-alpha-D-glucosamine 1-phosphate + CoA + H(+). The enzyme catalyses N-acetyl-alpha-D-glucosamine 1-phosphate + UTP + H(+) = UDP-N-acetyl-alpha-D-glucosamine + diphosphate. The protein operates within nucleotide-sugar biosynthesis; UDP-N-acetyl-alpha-D-glucosamine biosynthesis; N-acetyl-alpha-D-glucosamine 1-phosphate from alpha-D-glucosamine 6-phosphate (route II): step 2/2. It participates in nucleotide-sugar biosynthesis; UDP-N-acetyl-alpha-D-glucosamine biosynthesis; UDP-N-acetyl-alpha-D-glucosamine from N-acetyl-alpha-D-glucosamine 1-phosphate: step 1/1. It functions in the pathway bacterial outer membrane biogenesis; LPS lipid A biosynthesis. In terms of biological role, catalyzes the last two sequential reactions in the de novo biosynthetic pathway for UDP-N-acetylglucosamine (UDP-GlcNAc). The C-terminal domain catalyzes the transfer of acetyl group from acetyl coenzyme A to glucosamine-1-phosphate (GlcN-1-P) to produce N-acetylglucosamine-1-phosphate (GlcNAc-1-P), which is converted into UDP-GlcNAc by the transfer of uridine 5-monophosphate (from uridine 5-triphosphate), a reaction catalyzed by the N-terminal domain. The sequence is that of Bifunctional protein GlmU from Escherichia coli O45:K1 (strain S88 / ExPEC).